A 232-amino-acid chain; its full sequence is Octanoyltransferase (232 aa).

The region spanning 44-219 (EHTADEVWVV…QLARQFGLVL (176 aa)) is the BPL/LPL catalytic domain. Residues 83 to 90 (RGGQVTYH), 150 to 152 (ALG), and 163 to 165 (GLS) contribute to the substrate site. The active-site Acyl-thioester intermediate is Cys-181.

It belongs to the LipB family.

It localises to the cytoplasm. It carries out the reaction octanoyl-[ACP] + L-lysyl-[protein] = N(6)-octanoyl-L-lysyl-[protein] + holo-[ACP] + H(+). It functions in the pathway protein modification; protein lipoylation via endogenous pathway; protein N(6)-(lipoyl)lysine from octanoyl-[acyl-carrier-protein]: step 1/2. In terms of biological role, catalyzes the transfer of endogenously produced octanoic acid from octanoyl-acyl-carrier-protein onto the lipoyl domains of lipoate-dependent enzymes. Lipoyl-ACP can also act as a substrate although octanoyl-ACP is likely to be the physiological substrate. This Xanthomonas euvesicatoria pv. vesicatoria (strain 85-10) (Xanthomonas campestris pv. vesicatoria) protein is Octanoyltransferase.